The primary structure comprises 338 residues: MDMQQAIRAVTQRIDLSEQEMTAVMGLIMNGEATPAQMGGFLVGLAMKGETVDEVTAAARVMRDLATRVEVQAGHLVDTCGTGGDASGSFNISTASALVVAAAGGRVAKHGNRSVSSKSGSADVLEAAGVNLDLSPEQVARCIEQVGVGFLFAPKHHGAMKHAVGPRREMGVRTLFNVLGPLTNPAGAPNQVLGVFSNRWLEPLARVLGRLGSRHVMVVHAEDGLDEISIGAPTRVAELRDGEVTVRLIAPEDFGMERADLSRIRVEDAAGSLAMIRGVLDGQPGPARDIVLLNAGAALYVADVAGSHAEGIEMAREAINSGAAAEKLQQLVSFTASC.

5-phospho-alpha-D-ribose 1-diphosphate contacts are provided by residues Gly81, 84–85 (GD), Ser89, 91–94 (NIST), 109–117 (KHGNRSVSS), and Ser121. Gly81 contributes to the anthranilate binding site. Position 93 (Ser93) interacts with Mg(2+). Asn112 is a binding site for anthranilate. Position 167 (Arg167) interacts with anthranilate. Mg(2+)-binding residues include Asp226 and Glu227.

The protein belongs to the anthranilate phosphoribosyltransferase family. Homodimer. Mg(2+) serves as cofactor.

It catalyses the reaction N-(5-phospho-beta-D-ribosyl)anthranilate + diphosphate = 5-phospho-alpha-D-ribose 1-diphosphate + anthranilate. The protein operates within amino-acid biosynthesis; L-tryptophan biosynthesis; L-tryptophan from chorismate: step 2/5. In terms of biological role, catalyzes the transfer of the phosphoribosyl group of 5-phosphorylribose-1-pyrophosphate (PRPP) to anthranilate to yield N-(5'-phosphoribosyl)-anthranilate (PRA). This chain is Anthranilate phosphoribosyltransferase, found in Thioalkalivibrio sulfidiphilus (strain HL-EbGR7).